The following is a 316-amino-acid chain: Aspartate carbamoyltransferase catalytic subunit (316 aa).

Carbamoyl phosphate is bound by residues Arg-66 and Thr-67. An L-aspartate-binding site is contributed by Lys-94. Residues Arg-116, His-146, and Gln-149 each contribute to the carbamoyl phosphate site. Arg-179 and Arg-234 together coordinate L-aspartate. Carbamoyl phosphate is bound by residues Gly-275 and Pro-276.

The protein belongs to the aspartate/ornithine carbamoyltransferase superfamily. ATCase family. As to quaternary structure, heterododecamer (2C3:3R2) of six catalytic PyrB chains organized as two trimers (C3), and six regulatory PyrI chains organized as three dimers (R2).

It carries out the reaction carbamoyl phosphate + L-aspartate = N-carbamoyl-L-aspartate + phosphate + H(+). The protein operates within pyrimidine metabolism; UMP biosynthesis via de novo pathway; (S)-dihydroorotate from bicarbonate: step 2/3. Its function is as follows. Catalyzes the condensation of carbamoyl phosphate and aspartate to form carbamoyl aspartate and inorganic phosphate, the committed step in the de novo pyrimidine nucleotide biosynthesis pathway. This Nitrosomonas europaea (strain ATCC 19718 / CIP 103999 / KCTC 2705 / NBRC 14298) protein is Aspartate carbamoyltransferase catalytic subunit.